Consider the following 431-residue polypeptide: Glutamate--tRNA ligase 1 (431 aa).

A 'HIGH' region motif is present at residues 6–16 (PSPTGDMHIGN). Positions 235 to 239 (KMSKR) match the 'KMSKS' region motif. Residue Lys238 participates in ATP binding.

Belongs to the class-I aminoacyl-tRNA synthetase family. Glutamate--tRNA ligase type 1 subfamily. In terms of assembly, monomer.

The protein resides in the cytoplasm. It catalyses the reaction tRNA(Glu) + L-glutamate + ATP = L-glutamyl-tRNA(Glu) + AMP + diphosphate. Catalyzes the attachment of glutamate to tRNA(Glu) in a two-step reaction: glutamate is first activated by ATP to form Glu-AMP and then transferred to the acceptor end of tRNA(Glu). In Nitratiruptor sp. (strain SB155-2), this protein is Glutamate--tRNA ligase 1.